The chain runs to 309 residues: Tagatose-6-phosphate kinase (309 aa).

This sequence belongs to the carbohydrate kinase PfkB family. LacC subfamily.

The enzyme catalyses D-tagatofuranose 6-phosphate + ATP = D-tagatofuranose 1,6-bisphosphate + ADP + H(+). It participates in carbohydrate metabolism; D-tagatose 6-phosphate degradation; D-glyceraldehyde 3-phosphate and glycerone phosphate from D-tagatose 6-phosphate: step 1/2. This chain is Tagatose-6-phosphate kinase, found in Streptococcus pyogenes serotype M1.